Reading from the N-terminus, the 267-residue chain is PHD finger protein ALFIN-LIKE 7 (267 aa).

Residues 162 to 207 (TKVSNGSSKSNKSNPKPSKQSNSNSKPAKPPQPKDEEDSGPEGTED) form a disordered region. Positions 165–188 (SNGSSKSNKSNPKPSKQSNSNSKP) are enriched in low complexity. Residues 196-207 (DEEDSGPEGTED) are compositionally biased toward acidic residues. Residues 211–263 (AYMCGACGETYANGEFWICCDVCEKWFHGKCVRITPAKAEHIKQYKCPGCSSK) form a PHD-type zinc finger.

Belongs to the Alfin family. Interacts with H3K4me3 and to a lesser extent with H3K4me2.

It is found in the nucleus. In terms of biological role, histone-binding component that specifically recognizes H3 tails trimethylated on 'Lys-4' (H3K4me3), which mark transcription start sites of virtually all active genes. This is PHD finger protein ALFIN-LIKE 7 from Oryza sativa subsp. japonica (Rice).